The primary structure comprises 175 residues: Type-2 ice-structuring protein (175 aa).

Positions 1–16 (MLAALLVCAMVALTRA) are cleaved as a signal peptide. A propeptide spanning residues 17 to 33 (ANGDTGKEAVMTGSSGK) is cleaved from the precursor. One can recognise a C-type lectin domain in the interval 36–163 (TECPTDWKMF…LHASVCAKPA (128 aa)). Disulfide bonds link C38–C49, C66–C159, C103–C134, C123–C145, and C135–C151.

It localises to the secreted. Antifreeze proteins lower the blood freezing point. The polypeptide is Type-2 ice-structuring protein (Osmerus mordax (Rainbow smelt)).